A 459-amino-acid polypeptide reads, in one-letter code: Cysteine--tRNA ligase (459 aa).

Zn(2+) is bound at residue Cys28. The short motif at 30 to 40 (VTVYDLCHIGH) is the 'HIGH' region element. Residues Cys209, His234, and Glu238 each coordinate Zn(2+). The 'KMSKS' region signature appears at 266–270 (KMSKS). Lys269 is an ATP binding site.

This sequence belongs to the class-I aminoacyl-tRNA synthetase family. Monomer. It depends on Zn(2+) as a cofactor.

The protein localises to the cytoplasm. It catalyses the reaction tRNA(Cys) + L-cysteine + ATP = L-cysteinyl-tRNA(Cys) + AMP + diphosphate. This chain is Cysteine--tRNA ligase, found in Haemophilus influenzae (strain PittGG).